The chain runs to 1020 residues: Calcium-transporting ATPase 1 (1020 aa).

M1 is subject to N-acetylmethionine. The Stromal segment spans residues 1–162 (MESYLNENFG…NQFTESPSRG (162 aa)). The segment at 21 to 32 (ALQRWRKLCWIV) is interaction with calmodulin. S46 is subject to Phosphoserine; by CPK. A helical membrane pass occupies residues 163–183 (FWLFVWEALQDTTLMILAACA). The Lumenal portion of the chain corresponds to 184-201 (FVSLIVGILMEGWPIGAH). The helical transmembrane segment at 202 to 222 (DGLGIVASILLVVFVTATSDY) threads the bilayer. Residues 223–350 (RQSLQFKDLD…DDETPLQVKL (128 aa)) are Stromal-facing. Residues 351–370 (NGVATIIGKIGLFFAVITFA) traverse the membrane as a helical segment. Over 371–400 (VLVQGLANQKRLDNSHWIWTADELMAMLEY) the chain is Lumenal. Residues 401-418 (FAVAVTIVVVAVPEGLPL) form a helical membrane-spanning segment. Residues 419–813 (AVTLSLAFAM…KWGRSVYINI (395 aa)) are Stromal-facing. The active-site 4-aspartylphosphate intermediate is D456. Mg(2+) contacts are provided by D758 and D762. The helical transmembrane segment at 814–832 (QKFVQFQLTVNVVALIVNF) threads the bilayer. The Lumenal portion of the chain corresponds to 833–843 (LSACLTGNAPL). The helical transmembrane segment at 844–864 (TAVQLLWVNMIMDTLGALALA) threads the bilayer. The Stromal portion of the chain corresponds to 865–884 (TEPPQDDLMKRSPVGRKGNF). The helical transmembrane segment at 885 to 907 (ISNVMWRNILGQSLYQLVIIWCL) threads the bilayer. Residues 908-919 (QTKGKTMFGLDG) lie on the Lumenal side of the membrane. A helical transmembrane segment spans residues 920 to 941 (PDSDLTLNTLIFNIFVFCQVFN). The Stromal portion of the chain corresponds to 942-959 (EISSREMEKIDVFKGILK). A helical transmembrane segment spans residues 960-981 (NYVFVAVLTCTVVFQVIIIELL). Over 982–991 (GTFADTTPLN) the chain is Lumenal. Residues 992-1013 (LGQWLVSIILGFLGMPVAAALK) form a helical membrane-spanning segment. The Stromal portion of the chain corresponds to 1014–1020 (MIPVGSH).

The protein belongs to the cation transport ATPase (P-type) (TC 3.A.3) family. Type IIB subfamily. Expressed at higher levels in roots than in leaves.

The protein localises to the plastid. It is found in the chloroplast inner membrane. It catalyses the reaction Ca(2+)(in) + ATP + H2O = Ca(2+)(out) + ADP + phosphate + H(+). Activated by calmodulin. This magnesium-dependent enzyme catalyzes the hydrolysis of ATP coupled with the translocation of calcium from the cytosol out of the cell or into organelles. This is Calcium-transporting ATPase 1 (ACA1) from Arabidopsis thaliana (Mouse-ear cress).